A 210-amino-acid chain; its full sequence is Urease accessory protein UreF (210 aa).

Belongs to the UreF family. In terms of assembly, ureD, UreF and UreG form a complex that acts as a GTP-hydrolysis-dependent molecular chaperone, activating the urease apoprotein by helping to assemble the nickel containing metallocenter of UreC. The UreE protein probably delivers the nickel.

The protein localises to the cytoplasm. Its function is as follows. Required for maturation of urease via the functional incorporation of the urease nickel metallocenter. The chain is Urease accessory protein UreF from Cereibacter sphaeroides (strain ATCC 17029 / ATH 2.4.9) (Rhodobacter sphaeroides).